The chain runs to 398 residues: Apolipoprotein L1 (398 aa).

The signal sequence occupies residues 1-27; sequence MEGAALLRVSVLCIWMSALFLGVGVRA. Residues 35-47 show a composition bias toward polar residues; sequence QQNVPSGTDTGDP. The interval 35–55 is disordered; the sequence is QQNVPSGTDTGDPQSKPLGDW. The N-linked (GlcNAc...) asparagine glycan is linked to Asn-261. Positions 297–317 are disordered; it reads PHASASRPRVTEPISAESGEQ. Residues Ser-311 and Ser-314 each carry the phosphoserine; by FAM20C modification.

This sequence belongs to the apolipoprotein L family. As to quaternary structure, in plasma, interacts with APOA1 and mainly associated with large high density lipoprotein particles. Phosphorylated by FAM20C in the extracellular medium. As to expression, plasma. Found on APOA-I-containing high density lipoprotein (HDL3). Expressed in pancreas, lung, prostate, liver, placenta and spleen.

It is found in the secreted. Its function is as follows. May play a role in lipid exchange and transport throughout the body. May participate in reverse cholesterol transport from peripheral cells to the liver. The sequence is that of Apolipoprotein L1 (APOL1) from Homo sapiens (Human).